The chain runs to 164 residues: MTVLTIEEMAETLAPRQAIAGLDLGTKTIGLSMSDLGRRFATPRTVIRRVKFAIDAQALLDFAQSEKVAGFVIGLPMNMDGSAGPRVQATRAFVRNMEQKTALPFVYWDERLSTVAAERTLLEMDVSRAKRAERIDSAAASFILQGALDRLSLLARSDGDEFSA.

This sequence belongs to the YqgF nuclease family.

It is found in the cytoplasm. Its function is as follows. Could be a nuclease involved in processing of the 5'-end of pre-16S rRNA. This chain is Putative pre-16S rRNA nuclease, found in Rhizobium johnstonii (strain DSM 114642 / LMG 32736 / 3841) (Rhizobium leguminosarum bv. viciae).